A 153-amino-acid chain; its full sequence is SsrA-binding protein (153 aa).

Residues 132 to 153 form a disordered region; it reads REKDWLRERERVMKHDTRRRSD.

Belongs to the SmpB family.

The protein localises to the cytoplasm. Its function is as follows. Required for rescue of stalled ribosomes mediated by trans-translation. Binds to transfer-messenger RNA (tmRNA), required for stable association of tmRNA with ribosomes. tmRNA and SmpB together mimic tRNA shape, replacing the anticodon stem-loop with SmpB. tmRNA is encoded by the ssrA gene; the 2 termini fold to resemble tRNA(Ala) and it encodes a 'tag peptide', a short internal open reading frame. During trans-translation Ala-aminoacylated tmRNA acts like a tRNA, entering the A-site of stalled ribosomes, displacing the stalled mRNA. The ribosome then switches to translate the ORF on the tmRNA; the nascent peptide is terminated with the 'tag peptide' encoded by the tmRNA and targeted for degradation. The ribosome is freed to recommence translation, which seems to be the essential function of trans-translation. This is SsrA-binding protein from Bordetella avium (strain 197N).